The sequence spans 462 residues: B3 domain-containing protein REM8 (462 aa).

DNA-binding regions (TF-B3) lie at residues 11 to 103 (NKHF…LGPS), 148 to 243 (CFSQ…LCSR), and 249 to 346 (FVKL…FSKI). A disordered region spans residues 351–419 (FEAEDRRHKR…NLQKTQACSV (69 aa)). The segment covering 369-397 (ETDKGEPSRATKMGPELEKREKTAEKGEP) has biased composition (basic and acidic residues). The segment covering 399–418 (RASNKSSGKQGNLQKTQACS) has biased composition (polar residues).

The protein localises to the nucleus. The chain is B3 domain-containing protein REM8 (REM8) from Arabidopsis thaliana (Mouse-ear cress).